A 59-amino-acid chain; its full sequence is Large ribosomal subunit protein bL32 (59 aa).

Over residues 1 to 19 the composition is skewed to basic residues; sequence MPVPKRRMSRSNTRSRRAQ. The interval 1–20 is disordered; the sequence is MPVPKRRMSRSNTRSRRAQW.

The protein belongs to the bacterial ribosomal protein bL32 family.

The polypeptide is Large ribosomal subunit protein bL32 (Acidothermus cellulolyticus (strain ATCC 43068 / DSM 8971 / 11B)).